The primary structure comprises 377 residues: N-acetyldiaminopimelate deacetylase (377 aa).

The active site involves D69. E128 (proton acceptor) is an active-site residue.

Belongs to the peptidase M20A family. N-acetyldiaminopimelate deacetylase subfamily.

The catalysed reaction is N-acetyl-(2S,6S)-2,6-diaminopimelate + H2O = (2S,6S)-2,6-diaminopimelate + acetate. It participates in amino-acid biosynthesis; L-lysine biosynthesis via DAP pathway; LL-2,6-diaminopimelate from (S)-tetrahydrodipicolinate (acetylase route): step 3/3. Its function is as follows. Catalyzes the conversion of N-acetyl-diaminopimelate to diaminopimelate and acetate. This is N-acetyldiaminopimelate deacetylase from Streptococcus sanguinis (strain SK36).